A 322-amino-acid polypeptide reads, in one-letter code: MSLLRNFFSFTFSANSIITKPYFAIPIKAMEATSELNLNYPKPISAPPPPISKDIELRRAMEASSKSSLFNLTRDDILYEDEYLMAVNKPKGVYCEAVLRSAPQIVLDSSSEYHLANRLDRDTSGVMIITKSHKVAAKLVKAFTEHKIRKSYIALCIGSSPNWRRVTVSSGHGRSKHGAWRVYAALDVGRVLPGGSFVRDMETTFEVVSVNSVKNESCELEDVNHVIVAEGERELSCGGDDDDVVVVVRAFPRSGRTHQIRLHCQYLGIPIRGDVKYHGVYEWNGRTFEGHELHAECLSLDHPVTGDSIVIRAPLPYWAAGD.

Residue aspartate 120 is part of the active site.

It belongs to the pseudouridine synthase RluA family.

It catalyses the reaction a uridine in RNA = a pseudouridine in RNA. This chain is RNA pseudouridine synthase 1, found in Arabidopsis thaliana (Mouse-ear cress).